The primary structure comprises 154 residues: Large ribosomal subunit protein uL22 (154 aa).

It belongs to the universal ribosomal protein uL22 family. As to quaternary structure, part of the 50S ribosomal subunit.

In terms of biological role, this protein binds specifically to 23S rRNA. It makes multiple contacts with different domains of the 23S rRNA in the assembled 50S subunit and ribosome. The globular domain of the protein is located near the polypeptide exit tunnel on the outside of the subunit, while an extended beta-hairpin is found that lines the wall of the exit tunnel in the center of the 70S ribosome. In Natronomonas pharaonis (strain ATCC 35678 / DSM 2160 / CIP 103997 / JCM 8858 / NBRC 14720 / NCIMB 2260 / Gabara) (Halobacterium pharaonis), this protein is Large ribosomal subunit protein uL22.